Here is a 229-residue protein sequence, read N- to C-terminus: MAKKGKKYQDALKQIDANKVYTAEEAVELAKKIDFAKFDATVEVAFRLGVDPKKADQQIRGAVVLPNGTGKTQRVLVFAKGEKAKEAEAAGADYVGESEFVEKINQGWFEFDVIVATPDMMGEVGKLGRVLGPKGLMPNPKTGTVTMDVTKAVNEIKAGKVEYRVDKAGNVHAAIGKVSFDAAKLVENFRTVNDVLQKAKPAAAKGTYVKNLSVTTTFGPGIKVDPASL.

This sequence belongs to the universal ribosomal protein uL1 family. As to quaternary structure, part of the 50S ribosomal subunit.

Binds directly to 23S rRNA. The L1 stalk is quite mobile in the ribosome, and is involved in E site tRNA release. Functionally, protein L1 is also a translational repressor protein, it controls the translation of the L11 operon by binding to its mRNA. The chain is Large ribosomal subunit protein uL1 from Listeria innocua serovar 6a (strain ATCC BAA-680 / CLIP 11262).